The sequence spans 430 residues: Putative ABC transporter periplasmic-binding protein YcjN (430 aa).

The signal sequence occupies residues 1 to 19 (MIKSKIVLLSALVSCALIS).

Belongs to the bacterial solute-binding protein 1 family.

The protein localises to the periplasm. In terms of biological role, probably part of the binding-protein-dependent transport system YcjNOP. The sequence is that of Putative ABC transporter periplasmic-binding protein YcjN (ycjN) from Escherichia coli (strain K12).